The sequence spans 627 residues: (+)-sabinene synthase, chloroplastic (627 aa).

The N-terminal 46 residues, 1 to 46, are a transit peptide targeting the chloroplast; sequence MSVISIVPLASNSCLYKSLMSSTHELKALCRPIATLGMCRRGKSVM. The Mg(2+) site is built by D378, D382, and D530. Positions 378-382 match the DDXXD motif motif; it reads DDIYD.

The protein belongs to the terpene synthase family. Tpsd subfamily. As to quaternary structure, monomer. Mg(2+) is required as a cofactor.

Its subcellular location is the plastid. The protein resides in the chloroplast. The catalysed reaction is (2E)-geranyl diphosphate = (1R,5R)-sabinene + diphosphate. Its pathway is terpene metabolism; oleoresin biosynthesis. Functionally, terpene synthase (TPS) involved in defensive oleoresin formation in conifers in response to insect attack (e.g. white pine weevil P.strobi) or other injury. Produces (+)-sabinene from geranyl diphosphate, but has no activity with geranylgeranyl diphosphate or farnesyl diphosphate. This Picea sitchensis (Sitka spruce) protein is (+)-sabinene synthase, chloroplastic (TPS-sab).